Here is a 283-residue protein sequence, read N- to C-terminus: Undecaprenyl-diphosphatase (283 aa).

Helical transmembrane passes span Pro47–Phe67, Leu94–Leu114, Val127–Leu147, Ala197–Leu217, Gly227–Ile247, and Ile261–Ala281.

The protein belongs to the UppP family.

The protein resides in the cell inner membrane. The enzyme catalyses di-trans,octa-cis-undecaprenyl diphosphate + H2O = di-trans,octa-cis-undecaprenyl phosphate + phosphate + H(+). Catalyzes the dephosphorylation of undecaprenyl diphosphate (UPP). Confers resistance to bacitracin. This is Undecaprenyl-diphosphatase from Synechococcus sp. (strain CC9311).